We begin with the raw amino-acid sequence, 129 residues long: Putative protein p14 (129 aa).

This Acyrthosiphon pisum secondary endosymbiont phage 1 (Bacteriophage APSE-1) protein is Putative protein p14 (14).